We begin with the raw amino-acid sequence, 162 residues long: 2-C-methyl-D-erythritol 2,4-cyclodiphosphate synthase (162 aa).

2 residues coordinate a divalent metal cation: D9 and H11. 4-CDP-2-C-methyl-D-erythritol 2-phosphate-binding positions include 9-11 (DVH) and 35-36 (HS). Position 43 (H43) interacts with a divalent metal cation. Residues 57-59 (DIG), 62-66 (FPDTD), 133-136 (TTTE), F140, and R143 each bind 4-CDP-2-C-methyl-D-erythritol 2-phosphate.

This sequence belongs to the IspF family. In terms of assembly, homotrimer. The cofactor is a divalent metal cation.

It carries out the reaction 4-CDP-2-C-methyl-D-erythritol 2-phosphate = 2-C-methyl-D-erythritol 2,4-cyclic diphosphate + CMP. It participates in isoprenoid biosynthesis; isopentenyl diphosphate biosynthesis via DXP pathway; isopentenyl diphosphate from 1-deoxy-D-xylulose 5-phosphate: step 4/6. Involved in the biosynthesis of isopentenyl diphosphate (IPP) and dimethylallyl diphosphate (DMAPP), two major building blocks of isoprenoid compounds. Catalyzes the conversion of 4-diphosphocytidyl-2-C-methyl-D-erythritol 2-phosphate (CDP-ME2P) to 2-C-methyl-D-erythritol 2,4-cyclodiphosphate (ME-CPP) with a corresponding release of cytidine 5-monophosphate (CMP). The chain is 2-C-methyl-D-erythritol 2,4-cyclodiphosphate synthase from Histophilus somni (strain 129Pt) (Haemophilus somnus).